The following is a 479-amino-acid chain: Aldehyde dehydrogenase family 3 member B2 (479 aa).

Catalysis depends on residues glutamate 223 and cysteine 257. Cysteine 476 is subject to Cysteine methyl ester. The S-geranylgeranyl cysteine moiety is linked to residue cysteine 476. The propeptide at 477 to 479 (TLL) is removed in mature form.

Belongs to the aldehyde dehydrogenase family. In terms of processing, geranylgeranylation is important for localization to lipid droplets and enzyme activity. Expressed in testis, white adipose tissue, lung, small intestine, kidney, spleen and liver.

The protein resides in the lipid droplet. The catalysed reaction is an aldehyde + NAD(+) + H2O = a carboxylate + NADH + 2 H(+). It catalyses the reaction a long-chain fatty aldehyde + NAD(+) + H2O = a long-chain fatty acid + NADH + 2 H(+). The enzyme catalyses a medium-chain fatty aldehyde + NAD(+) + H2O = a medium-chain fatty acid + NADH + 2 H(+). It carries out the reaction hexadecanoate + NADH + 2 H(+) = hexadecanal + NAD(+) + H2O. The catalysed reaction is octanal + NAD(+) + H2O = octanoate + NADH + 2 H(+). Its pathway is alcohol metabolism; ethanol degradation; acetate from ethanol: step 2/2. Its function is as follows. Oxidizes medium and long chain fatty aldehydes in lipid droplets into non-toxic fatty acids. The chain is Aldehyde dehydrogenase family 3 member B2 from Mus musculus (Mouse).